Reading from the N-terminus, the 54-residue chain is Ovomucoid (54 aa).

The Kazal-like domain maps to 4 to 54 (VDCSDYPRPVCTLDYMPLCGSDNKTYSNKCNFCNAVVDSNGTITLSHFGRC). 3 disulfides stabilise this stretch: Cys-6–Cys-36, Cys-14–Cys-33, and Cys-22–Cys-54. An N-linked (GlcNAc...) asparagine glycan is attached at Asn-43.

Its subcellular location is the secreted. This Corvus albus (Pied crow) protein is Ovomucoid.